Here is a 288-residue protein sequence, read N- to C-terminus: Bifunctional protein FolD (288 aa).

Residues 164–166 (GTS) and isoleucine 230 contribute to the NADP(+) site.

This sequence belongs to the tetrahydrofolate dehydrogenase/cyclohydrolase family. Homodimer.

The catalysed reaction is (6R)-5,10-methylene-5,6,7,8-tetrahydrofolate + NADP(+) = (6R)-5,10-methenyltetrahydrofolate + NADPH. It carries out the reaction (6R)-5,10-methenyltetrahydrofolate + H2O = (6R)-10-formyltetrahydrofolate + H(+). Its pathway is one-carbon metabolism; tetrahydrofolate interconversion. In terms of biological role, catalyzes the oxidation of 5,10-methylenetetrahydrofolate to 5,10-methenyltetrahydrofolate and then the hydrolysis of 5,10-methenyltetrahydrofolate to 10-formyltetrahydrofolate. This chain is Bifunctional protein FolD, found in Mycoplasma mycoides subsp. mycoides SC (strain CCUG 32753 / NCTC 10114 / PG1).